We begin with the raw amino-acid sequence, 431 residues long: Adenylosuccinate lyase (431 aa).

N(6)-(1,2-dicarboxyethyl)-AMP is bound by residues 4–5 (RY), 67–69 (RHD), and 93–94 (TS). Catalysis depends on histidine 141, which acts as the Proton donor/acceptor. Residue glutamine 212 coordinates N(6)-(1,2-dicarboxyethyl)-AMP. Serine 262 acts as the Proton donor/acceptor in catalysis. N(6)-(1,2-dicarboxyethyl)-AMP is bound by residues serine 263, 268–270 (KRN), asparagine 276, and 307–311 (SAERI).

It belongs to the lyase 1 family. Adenylosuccinate lyase subfamily. Homodimer and homotetramer. Residues from neighboring subunits contribute catalytic and substrate-binding residues to each active site.

The enzyme catalyses N(6)-(1,2-dicarboxyethyl)-AMP = fumarate + AMP. It carries out the reaction (2S)-2-[5-amino-1-(5-phospho-beta-D-ribosyl)imidazole-4-carboxamido]succinate = 5-amino-1-(5-phospho-beta-D-ribosyl)imidazole-4-carboxamide + fumarate. Its pathway is purine metabolism; AMP biosynthesis via de novo pathway; AMP from IMP: step 2/2. It participates in purine metabolism; IMP biosynthesis via de novo pathway; 5-amino-1-(5-phospho-D-ribosyl)imidazole-4-carboxamide from 5-amino-1-(5-phospho-D-ribosyl)imidazole-4-carboxylate: step 2/2. In terms of biological role, catalyzes two reactions in de novo purine nucleotide biosynthesis. Catalyzes the breakdown of 5-aminoimidazole- (N-succinylocarboxamide) ribotide (SAICAR or 2-[5-amino-1-(5-phospho-beta-D-ribosyl)imidazole-4-carboxamido]succinate) to 5-aminoimidazole-4-carboxamide ribotide (AICAR or 5-amino-1-(5-phospho-beta-D-ribosyl)imidazole-4-carboxamide) and fumarate, and of adenylosuccinate (ADS or N(6)-(1,2-dicarboxyethyl)-AMP) to adenosine monophosphate (AMP) and fumarate. In Staphylococcus epidermidis (strain ATCC 35984 / DSM 28319 / BCRC 17069 / CCUG 31568 / BM 3577 / RP62A), this protein is Adenylosuccinate lyase (purB).